A 2272-amino-acid polypeptide reads, in one-letter code: Voltage-dependent R-type calcium channel subunit alpha-1E (2272 aa).

A disordered region spans residues 1 to 40 (MARFGEAVVVGRPGSGDGDSDQSRNRQGTPVPASGPAAAY). The Cytoplasmic portion of the chain corresponds to 1–90 (MARFGEAVVV…KYAKKLIDWP (90 aa)). Phosphoserine occurs at positions 15 and 20. Residues 77-355 (NIVRKYAKKL…LVLGVLSGEF (279 aa)) form an I repeat. The helical transmembrane segment at 91-109 (PFEYMILATIIANCIVLAL) threads the bilayer. Residues 110 to 128 (EQHLPEDDKTPMSRRLEKT) lie on the Extracellular side of the membrane. A helical membrane pass occupies residues 129–147 (EPYFIGIFCFEAGIKIVAL). Residues 148-159 (GFIFHKGSYLRN) lie on the Cytoplasmic side of the membrane. A helical membrane pass occupies residues 160 to 174 (GWNVMDFIVVLSGIL). Topologically, residues 175-186 (ATAGTHFNTHVD) are extracellular. Residues 187–206 (LRALRAVRVLRPLKLVSGIP) traverse the membrane as a helical segment. Over 207–224 (SLQIVLKSIMKAMVPLLQ) the chain is Cytoplasmic. The chain crosses the membrane as a helical span at residues 225–245 (IGLLLFFAILMFAIIGLEFYS). The Extracellular portion of the chain corresponds to 246–327 (GKLHRACFMN…NTNDALGATW (82 aa)). Asn255 carries N-linked (GlcNAc...) asparagine glycosylation. A helical transmembrane segment spans residues 328 to 351 (NWLYFIPLIIIGSFFVLNLVLGVL). Residues 352–477 (SGEFAKERER…ISIRHMVKSQ (126 aa)) lie on the Cytoplasmic side of the membrane. The interval 375–392 (QQIERELNGYRAWIDKAE) is binding to the beta subunit. Residue Asp427 participates in Ca(2+) binding. The residue at position 428 (Ser428) is a Phosphoserine. Positions 429, 431, 433, and 438 each coordinate Ca(2+). Thr441 carries the post-translational modification Phosphothreonine. The stretch at 463-707 (ERLLRISIRH…VFLAIAVDNL (245 aa)) is one II repeat. A helical membrane pass occupies residues 478–497 (VFYWIVLSVVALNTACVAIV). The Extracellular segment spans residues 498-510 (HHNQPQWLTHLLY). A helical membrane pass occupies residues 511–530 (YAEFLFLGLFLLEMSLKMYG). The Cytoplasmic portion of the chain corresponds to 531–539 (MGPRLYFHS). The chain crosses the membrane as a helical span at residues 540–558 (SFNCFDFGVTVGSIFEVVW). The Extracellular portion of the chain corresponds to 559–568 (AIFRPGTSFG). The chain crosses the membrane as a helical span at residues 569-587 (ISVLRALRLLRIFKITKYW). Residues 588–606 (ASLRNLVVSLMSSMKSIIS) are Cytoplasmic-facing. Residues 607 to 626 (LLFLLFLFIVVFALLGMQLF) form a helical membrane-spanning segment. At 627–679 (GGRFNFNDGTPSANFDTFPAAIMTVFQILTGEDWNEVMYNGIRSQGGVSSGMW) the chain is on the extracellular side. Residues 680–704 (SAIYFIVLTLFGNYTLLNVFLAIAV) form a helical membrane-spanning segment. Over 705–1150 (DNLANAQELT…TTNPIRRACH (446 aa)) the chain is Cytoplasmic. Residues 730–777 (LQKAKEVSPMSAPNMPSIERDRRRRHHMSMWEPRSSHLRERRRRHHMS) form a disordered region. Phosphoserine occurs at positions 737, 746, 794, 816, and 856. 2 disordered regions span residues 854–994 (GGSL…VPRG) and 1091–1127 (SNKT…RETG). Residues 914–927 (RHRQSQRRSRHRRV) are compositionally biased toward basic residues. Residues 934–946 (SASASRSRSASQE) show a composition bias toward low complexity. Ser948 carries the post-translational modification Phosphoserine. 2 stretches are compositionally biased toward basic and acidic residues: residues 956 to 985 (EGEK…DLRR) and 1094 to 1105 (TDGEASPLKEAE). Ser1099 carries the phosphoserine modification. The III repeat unit spans residues 1143–1429 (NPIRRACHYI…IFVALIIITF (287 aa)). Residues 1151–1167 (YIVNLRYFEMCILLVIA) form a helical membrane-spanning segment. Topologically, residues 1168-1191 (ASSIALAAEDPVLTNSERNKVLRY) are extracellular. A helical membrane pass occupies residues 1192 to 1211 (FDYVFTGVFTFEMVIKMIDQ). Over 1212 to 1219 (GLILQDGS) the chain is Cytoplasmic. A helical transmembrane segment spans residues 1220-1242 (YFRDLWNILDFVVVVGALVAFAL). Over 1243 to 1256 (ANALGTNKGRDIKT) the chain is Extracellular. A helical transmembrane segment spans residues 1257-1274 (IKSLRVLRVLRPLKTIKR). The Cytoplasmic portion of the chain corresponds to 1275–1293 (LPKLKAVFDCVVTSLKNVF). The chain crosses the membrane as a helical span at residues 1294–1313 (NILIVYKLFMFIFAVIAVQL). Topologically, residues 1314–1400 (FKGKFFYCTD…DRGPSRSNRM (87 aa)) are extracellular. Residues 1401-1424 (EMSIFYVVYFVVFPFFFVNIFVAL) form a helical membrane-spanning segment. Residues 1425–1481 (IIITFQEQGDKMMEECSLEKNERACIDFAISAKPLTRYMPQNRHTFQYRVWHFVVSP) lie on the Cytoplasmic side of the membrane. Residues 1466–1729 (NRHTFQYRVW…LFVAVIMDNF (264 aa)) form an IV repeat. A helical transmembrane segment spans residues 1482 to 1500 (SFEYTIMAMIALNTVVLMM). At 1501–1515 (KYYTAPCTYELALKY) the chain is on the extracellular side. Residues 1516-1535 (LNIAFTMVFSLECVLKVIAF) form a helical membrane-spanning segment. Topologically, residues 1536 to 1543 (GFLNYFRD) are cytoplasmic. The helical transmembrane segment at 1544-1562 (TWNIFDFITVIGSITEIIL) threads the bilayer. The Extracellular portion of the chain corresponds to 1563-1573 (TDSKLVNTSGF). A glycan (N-linked (GlcNAc...) asparagine) is linked at Asn1569. A helical transmembrane segment spans residues 1574-1592 (NMSFLKLFRAARLIKLLRQ). Residues 1593–1611 (GYTIRILLWTFVQSFKALP) lie on the Cytoplasmic side of the membrane. Residues 1612 to 1631 (YVCLLIAMLFFIYAIIGMQV) form a helical membrane-spanning segment. At 1632–1700 (FGNIKLDEES…QNESERCGTD (69 aa)) the chain is on the extracellular side. N-linked (GlcNAc...) asparagine glycosylation is present at Asn1692. A helical transmembrane segment spans residues 1701–1726 (LAYVYFVSFIFFCSFLMLNLFVAVIM). Residues 1727–2272 (DNFEYLTRDS…LSDTEEDDKC (546 aa)) lie on the Cytoplasmic side of the membrane. An EF-hand domain is found at 1742–1777 (HHLDEFVRVWAEYDRAACGRIHYTEMYEMLTLMSPP). Positions 1755, 1761, and 1766 each coordinate Ca(2+). The disordered stretch occupies residues 2021 to 2186 (SAHRLNSDSG…QQGQHPSPQH (166 aa)). Over residues 2025–2045 (LNSDSGHKSDTHRSGGRERGR) the composition is skewed to basic and acidic residues. A phosphoserine mark is found at Ser2054 and Ser2073. Residues 2061–2078 (NSEERGTQADWESPERRQ) are compositionally biased toward basic and acidic residues. Residues 2097 to 2112 (SLSESSIPSISDTSTP) show a composition bias toward low complexity. Polar residues predominate over residues 2155 to 2174 (LASQALESNSACLTESSNSL). A compositionally biased stretch (low complexity) spans 2175–2186 (HPQQGQHPSPQH).

It belongs to the calcium channel alpha-1 subunit (TC 1.A.1.11) family. CACNA1E subfamily. As to quaternary structure, interacts with EFHC1. Voltage-dependent calcium channels are multisubunit complexes, consisting of alpha-1, alpha-2, beta and delta subunits in a 1:1:1:1 ratio. The channel activity is directed by the pore-forming and voltage-sensitive alpha-1 subunit. In many cases, this subunit is sufficient to generate voltage-sensitive calcium channel activity. The auxiliary subunits beta and alpha-2/delta linked by a disulfide bridge regulate the channel activity. As to expression, expressed in neuronal tissues, retina, spleen, and pancreatic islet cells.

It is found in the membrane. It catalyses the reaction Ca(2+)(in) = Ca(2+)(out). Its function is as follows. Voltage-sensitive calcium channels (VSCC) mediate the entry of calcium ions into excitable cells and are also involved in a variety of calcium-dependent processes, including muscle contraction, hormone or neurotransmitter release, gene expression, cell motility, cell division and cell death. The isoform alpha-1E gives rise to R-type calcium currents. R-type calcium channels belong to the 'high-voltage activated' (HVA) group and are blocked by nickel. They are however insensitive to dihydropyridines (DHP). Calcium channels containing alpha-1E subunit could be involved in the modulation of firing patterns of neurons which is important for information processing. This is Voltage-dependent R-type calcium channel subunit alpha-1E (Cacna1e) from Mus musculus (Mouse).